The chain runs to 447 residues: Rab GDP dissociation inhibitor alpha (447 aa).

This sequence belongs to the Rab GDI family. As to quaternary structure, interacts with RHOH. Interacts with the non-phosphorylated forms of RAB1A, RAB3A, RAB5A, RAB5B, RAB5C, RAB8A, RAB8B, RAB10, RAB12, RAB35, and RAB43.

It localises to the cytoplasm. It is found in the golgi apparatus. The protein localises to the trans-Golgi network. Regulates the GDP/GTP exchange reaction of most Rab proteins by inhibiting the dissociation of GDP from them, and the subsequent binding of GTP to them. Promotes the dissociation of GDP-bound Rab proteins from the membrane and inhibits their activation. Promotes the dissociation of RAB1A, RAB3A, RAB5A and RAB10 from membranes. The protein is Rab GDP dissociation inhibitor alpha (GDI1) of Pongo pygmaeus (Bornean orangutan).